The following is a 105-amino-acid chain: Large ribosomal subunit protein uL24 (105 aa).

This sequence belongs to the universal ribosomal protein uL24 family. In terms of assembly, part of the 50S ribosomal subunit.

Functionally, one of two assembly initiator proteins, it binds directly to the 5'-end of the 23S rRNA, where it nucleates assembly of the 50S subunit. In terms of biological role, one of the proteins that surrounds the polypeptide exit tunnel on the outside of the subunit. This chain is Large ribosomal subunit protein uL24, found in Vibrio vulnificus (strain YJ016).